Here is a 712-residue protein sequence, read N- to C-terminus: Elongation factor G (712 aa).

The tr-type G domain maps to 8 to 290 (TRYRNIGISA…AVIEFLPSPT (283 aa)). GTP contacts are provided by residues 17-24 (AHIDAGKT), 88-92 (DTPGH), and 142-145 (NKMD).

The protein belongs to the TRAFAC class translation factor GTPase superfamily. Classic translation factor GTPase family. EF-G/EF-2 subfamily.

The protein resides in the cytoplasm. Its function is as follows. Catalyzes the GTP-dependent ribosomal translocation step during translation elongation. During this step, the ribosome changes from the pre-translocational (PRE) to the post-translocational (POST) state as the newly formed A-site-bound peptidyl-tRNA and P-site-bound deacylated tRNA move to the P and E sites, respectively. Catalyzes the coordinated movement of the two tRNA molecules, the mRNA and conformational changes in the ribosome. In Acinetobacter baumannii (strain AB307-0294), this protein is Elongation factor G.